Here is a 63-residue protein sequence, read N- to C-terminus: Large ribosomal subunit protein uL29 (63 aa).

It belongs to the universal ribosomal protein uL29 family.

This is Large ribosomal subunit protein uL29 from Proteus mirabilis (strain HI4320).